Reading from the N-terminus, the 263-residue chain is Endonuclease 8 (263 aa).

The active-site Schiff-base intermediate with DNA is Pro-2. Glu-3 functions as the Proton donor in the catalytic mechanism. Residue Lys-53 is the Proton donor; for beta-elimination activity of the active site. The DNA site is built by Gln-70, Arg-125, and Asn-169. Residues 229-263 (KVFHRDGELCERCGGIIEKTTLSSRPFYWCPGCQH) form an FPG-type zinc finger. The active-site Proton donor; for delta-elimination activity is the Arg-253.

Belongs to the FPG family. Zn(2+) serves as cofactor.

The catalysed reaction is 2'-deoxyribonucleotide-(2'-deoxyribose 5'-phosphate)-2'-deoxyribonucleotide-DNA = a 3'-end 2'-deoxyribonucleotide-(2,3-dehydro-2,3-deoxyribose 5'-phosphate)-DNA + a 5'-end 5'-phospho-2'-deoxyribonucleoside-DNA + H(+). Functionally, involved in base excision repair of DNA damaged by oxidation or by mutagenic agents. Acts as a DNA glycosylase that recognizes and removes damaged bases. Has a preference for oxidized pyrimidines, such as thymine glycol, 5,6-dihydrouracil and 5,6-dihydrothymine. Has AP (apurinic/apyrimidinic) lyase activity and introduces nicks in the DNA strand. Cleaves the DNA backbone by beta-delta elimination to generate a single-strand break at the site of the removed base with both 3'- and 5'-phosphates. The sequence is that of Endonuclease 8 from Escherichia coli (strain 55989 / EAEC).